The sequence spans 82 residues: Small ribosomal subunit protein bS16 (82 aa).

This sequence belongs to the bacterial ribosomal protein bS16 family.

The protein is Small ribosomal subunit protein bS16 of Serratia proteamaculans (strain 568).